The following is a 252-amino-acid chain: 5'-nucleotidase SurE (252 aa).

Positions 8, 9, 39, and 91 each coordinate a divalent metal cation.

Belongs to the SurE nucleotidase family. A divalent metal cation is required as a cofactor.

It localises to the cytoplasm. It catalyses the reaction a ribonucleoside 5'-phosphate + H2O = a ribonucleoside + phosphate. Nucleotidase that shows phosphatase activity on nucleoside 5'-monophosphates. The protein is 5'-nucleotidase SurE of Legionella pneumophila (strain Corby).